Consider the following 80-residue polypeptide: Exodeoxyribonuclease 7 small subunit (80 aa).

The protein belongs to the XseB family. In terms of assembly, heterooligomer composed of large and small subunits.

Its subcellular location is the cytoplasm. The enzyme catalyses Exonucleolytic cleavage in either 5'- to 3'- or 3'- to 5'-direction to yield nucleoside 5'-phosphates.. In terms of biological role, bidirectionally degrades single-stranded DNA into large acid-insoluble oligonucleotides, which are then degraded further into small acid-soluble oligonucleotides. The protein is Exodeoxyribonuclease 7 small subunit of Phenylobacterium zucineum (strain HLK1).